We begin with the raw amino-acid sequence, 242 residues long: Histone-lysine N-methyltransferase set-1 (242 aa).

The segment at 1–61 is disordered; sequence MKVAAKKLAT…TRSRKGVSVK (61 aa). The span at 30 to 43 shows a compositional bias: low complexity; that stretch reads SENPSSLASHSSSS. Positions 104-226 constitute an SET domain; that stretch reads RLLEVYKDVV…QGEELLYDYG (123 aa). Residues 114 to 116, Y159, and 186 to 187 each bind S-adenosyl-L-methionine; these read KGR and NH.

The protein belongs to the class V-like SAM-binding methyltransferase superfamily. Histone-lysine methyltransferase family. PR/SET subfamily. As to expression, in embryos, it is expressed ubiquitously. In late embryos, it is expressed in hypodermal seam cells. In L3 and L4 larvae and thereafter, it is expressed in vulval precursor cells. In adult males, it is also expressed in 6 unidentified posterior cells.

The protein localises to the nucleus. The protein resides in the chromosome. It carries out the reaction L-lysyl(20)-[histone H4] + S-adenosyl-L-methionine = N(6)-methyl-L-lysyl(20)-[histone H4] + S-adenosyl-L-homocysteine + H(+). Histone methyltransferase that specifically monomethylates 'Lys-20' of histone H4 (H4K20me1). H4K20me1 is enriched on hermaphrodite X chromosomes and during mitosis. Involved in dosage compensation by repression of X-linked gene expression in hermaphrodites. Plays a role in growth and body fat regulation downstream of the TOR complex 2 pathway. The chain is Histone-lysine N-methyltransferase set-1 (set-1) from Caenorhabditis elegans.